The sequence spans 389 residues: Chalcone synthase E (389 aa).

Cysteine 164 is a catalytic residue.

It belongs to the thiolase-like superfamily. Chalcone/stilbene synthases family.

It carries out the reaction (E)-4-coumaroyl-CoA + 3 malonyl-CoA + 3 H(+) = 2',4,4',6'-tetrahydroxychalcone + 3 CO2 + 4 CoA. Its pathway is secondary metabolite biosynthesis; flavonoid biosynthesis. Its function is as follows. The primary product of this enzyme is 4,2',4',6'-tetrahydroxychalcone (also termed naringenin-chalcone or chalcone) which can under specific conditions spontaneously isomerize into naringenin. The sequence is that of Chalcone synthase E (CHSE) from Ipomoea purpurea (Common morning glory).